The primary structure comprises 474 residues: tRNA modification GTPase MnmE (474 aa).

The (6S)-5-formyl-5,6,7,8-tetrahydrofolate site is built by Arg-23, Glu-86, and Lys-125. Residues 221 to 396 (GIPVAIVGEP…LKEKLLEYVN (176 aa)) enclose the TrmE-type G domain. Asn-231 serves as a coordination point for K(+). Residues 231–236 (NVGKST), 250–256 (SEIAGTT), and 275–278 (DTAG) contribute to the GTP site. Ser-235 contributes to the Mg(2+) binding site. Residues Ser-250, Ile-252, and Thr-255 each coordinate K(+). Thr-256 provides a ligand contact to Mg(2+). Residue Lys-474 participates in (6S)-5-formyl-5,6,7,8-tetrahydrofolate binding.

This sequence belongs to the TRAFAC class TrmE-Era-EngA-EngB-Septin-like GTPase superfamily. TrmE GTPase family. In terms of assembly, homodimer. Heterotetramer of two MnmE and two MnmG subunits. Requires K(+) as cofactor.

Its subcellular location is the cytoplasm. Its function is as follows. Exhibits a very high intrinsic GTPase hydrolysis rate. Involved in the addition of a carboxymethylaminomethyl (cmnm) group at the wobble position (U34) of certain tRNAs, forming tRNA-cmnm(5)s(2)U34. This chain is tRNA modification GTPase MnmE, found in Christiangramia forsetii (strain DSM 17595 / CGMCC 1.15422 / KT0803) (Gramella forsetii).